A 508-amino-acid chain; its full sequence is Tryptamine 4-monooxygenase (508 aa).

An N-terminal signal peptide occupies residues 1–19 (MIAVLFSFVIAGCIYYIVS). A heme-binding site is contributed by Cys439.

Belongs to the cytochrome P450 family. Heme serves as cofactor.

The catalysed reaction is tryptamine + AH2 + O2 = 4-hydroxytryptamine + A + H2O. It participates in secondary metabolite biosynthesis. Its function is as follows. Cytochrome P450 monooxygenase; part of the gene cluster that mediates the biosynthesis of psilocybin, a psychotropic tryptamine-derived natural product. The first step in the pathway is the decarboxylation of L-tryptophan to tryptamine by the decarboxylase psiD. 4-hydroxy-L-tryptophan is accepted as substrate by psiD as well. The cytochrome P450 monooxygenase psiH then converts tryptamine to 4-hydroxytryptamine. The kinase psiK catalyzes the 4-O-phosphorylation step by converting 4-hydroxytryptamine into norbaeocystin. The methyltransferase psiM then catalyzes iterative methyl transfer to the amino group of norbaeocystin to yield psilocybin via a monomethylated intermediate, baeocystin. The chain is Tryptamine 4-monooxygenase from Psilocybe cubensis (Psychedelic mushroom).